Consider the following 295-residue polypeptide: Ubiquitin-conjugating enzyme E2-34 kDa (295 aa).

Positions threonine 7–glutamine 169 constitute a UBC core domain. Catalysis depends on cysteine 95, which acts as the Glycyl thioester intermediate. Residues isoleucine 185–isoleucine 295 are disordered. Serine 186 carries the post-translational modification Phosphoserine. Over residues lysine 189–alanine 200 the composition is skewed to basic and acidic residues. Composition is skewed to acidic residues over residues serine 207–aspartate 226 and glutamate 234–aspartate 265. Over residues valine 269–glutamate 279 the composition is skewed to basic and acidic residues. A phosphoserine mark is found at serine 282 and serine 292.

The protein belongs to the ubiquitin-conjugating enzyme family. In terms of assembly, interacts with CDC53. Component of the E3 ubiquitin ligase complexes SCF with CDC53, SKP1/CBF3D, HRT1 and some F-box proteins like MET30 and CDC4.

The protein resides in the cytoplasm. Its subcellular location is the nucleus. The enzyme catalyses S-ubiquitinyl-[E1 ubiquitin-activating enzyme]-L-cysteine + [E2 ubiquitin-conjugating enzyme]-L-cysteine = [E1 ubiquitin-activating enzyme]-L-cysteine + S-ubiquitinyl-[E2 ubiquitin-conjugating enzyme]-L-cysteine.. The protein operates within protein modification; protein ubiquitination. Catalyzes the covalent attachment of ubiquitin to other proteins. Capable, in vitro, to ubiquitinate histone H2A. In terms of biological role, mediates the initiation of DNA replication (transition of G1 to S phase in cell cycle). Essential component of the E3 ubiquitin ligase complex SCF (SKP1-CUL1-F-box protein), which mediates the ubiquitination and subsequent proteasomal degradation of target proteins. Involved in the regulation of methionine biosynthesis genes and in the degradation of CDC6 together with CDC4 and CDC53. This Saccharomyces cerevisiae (strain ATCC 204508 / S288c) (Baker's yeast) protein is Ubiquitin-conjugating enzyme E2-34 kDa (CDC34).